Consider the following 329-residue polypeptide: MKPLRFAVTPGEPAGIGPDLCLLLAADAQPHPLIAITSRDLLAERATQLGLAVSLLPVAPGQWPDLPAPAGSLYVWDTPLAAPVVPGQLDKANAAFVLETLTRAGQGCLDGHFAGMITAPVHKGVINESGIAFSGHTEFLAELTRTAQVVMMLATRGLRVALVTTHLPLRDVADAITAERVERVTRILHADMRDKFGIANPRILVCGLNPHAGEGGHLGREEIDIIEPTLARLRTEGMDLRGPLPADTLFTPKYLEHCDAVLAMYHDQGLPVLKYKGFGAAVNVTLGLPIIRTSVDHGTALDLAGTGKVDTGSLRVALETAYQMAENRP.

Residues His-136 and Thr-137 each contribute to the substrate site. The a divalent metal cation site is built by His-166, His-211, and His-266. Substrate-binding residues include Lys-274, Asn-283, and Arg-292.

It belongs to the PdxA family. Homodimer. The cofactor is Zn(2+). Mg(2+) serves as cofactor. It depends on Co(2+) as a cofactor.

Its subcellular location is the cytoplasm. The catalysed reaction is 4-(phosphooxy)-L-threonine + NAD(+) = 3-amino-2-oxopropyl phosphate + CO2 + NADH. Its pathway is cofactor biosynthesis; pyridoxine 5'-phosphate biosynthesis; pyridoxine 5'-phosphate from D-erythrose 4-phosphate: step 4/5. Catalyzes the NAD(P)-dependent oxidation of 4-(phosphooxy)-L-threonine (HTP) into 2-amino-3-oxo-4-(phosphooxy)butyric acid which spontaneously decarboxylates to form 3-amino-2-oxopropyl phosphate (AHAP). In Pseudomonas putida (strain ATCC 47054 / DSM 6125 / CFBP 8728 / NCIMB 11950 / KT2440), this protein is 4-hydroxythreonine-4-phosphate dehydrogenase.